The primary structure comprises 140 residues: Large ribosomal subunit protein uL16 (140 aa).

Belongs to the universal ribosomal protein uL16 family. As to quaternary structure, part of the 50S ribosomal subunit.

Binds 23S rRNA and is also seen to make contacts with the A and possibly P site tRNAs. In Citrifermentans bemidjiense (strain ATCC BAA-1014 / DSM 16622 / JCM 12645 / Bem) (Geobacter bemidjiensis), this protein is Large ribosomal subunit protein uL16.